The chain runs to 146 residues: Hemoglobin subunit beta (146 aa).

One can recognise a Globin domain in the interval 2-146 (EWTQQERSII…VVFALGRKYH (145 aa)). Residues H63 and H92 each contribute to the heme b site.

It belongs to the globin family. Heterotetramer of two alpha chains and two beta chains. Red blood cells.

In terms of biological role, involved in oxygen transport from gills to the various peripheral tissues. This chain is Hemoglobin subunit beta (hbb), found in Thunnus thynnus (Atlantic bluefin tuna).